The chain runs to 271 residues: Glutamate racemase (271 aa).

Substrate is bound by residues 9 to 10 (DS) and 41 to 42 (YG). Cys-72 (proton donor/acceptor) is an active-site residue. Residue 73-74 (NT) coordinates substrate. Cys-183 serves as the catalytic Proton donor/acceptor. Substrate is bound at residue 184–185 (TH).

It belongs to the aspartate/glutamate racemases family.

It catalyses the reaction L-glutamate = D-glutamate. It functions in the pathway cell wall biogenesis; peptidoglycan biosynthesis. Its function is as follows. Provides the (R)-glutamate required for cell wall biosynthesis. The protein is Glutamate racemase of Exiguobacterium sibiricum (strain DSM 17290 / CCUG 55495 / CIP 109462 / JCM 13490 / 255-15).